The following is a 75-amino-acid chain: MKEQKRISESLITESLTNDMFWVCLENEDPILGYVSGRIRHSFIHILVKISVSCYDSTRTRRRIIYRLRNKDSND.

Belongs to the IF-1 family. As to quaternary structure, component of the 30S ribosomal translation pre-initiation complex which assembles on the 30S ribosome in the order IF-2 and IF-3, IF-1 and N-formylmethionyl-tRNA(fMet); mRNA recruitment can occur at any time during PIC assembly.

It is found in the plastid. The protein resides in the chloroplast. One of the essential components for the initiation of protein synthesis. Stabilizes the binding of IF-2 and IF-3 on the 30S subunit to which N-formylmethionyl-tRNA(fMet) subsequently binds. Helps modulate mRNA selection, yielding the 30S pre-initiation complex (PIC). Upon addition of the 50S ribosomal subunit IF-1, IF-2 and IF-3 are released leaving the mature 70S translation initiation complex. The chain is Translation initiation factor IF-1, chloroplastic (infA) from Cucumis sativus (Cucumber).